The sequence spans 248 residues: Probable transcriptional regulatory protein R02753 (248 aa).

The protein belongs to the TACO1 family.

The protein resides in the cytoplasm. The chain is Probable transcriptional regulatory protein R02753 from Rhizobium meliloti (strain 1021) (Ensifer meliloti).